A 258-amino-acid chain; its full sequence is Imidazole glycerol phosphate synthase subunit HisF (258 aa).

Active-site residues include aspartate 11 and aspartate 130.

The protein belongs to the HisA/HisF family. In terms of assembly, heterodimer of HisH and HisF.

It is found in the cytoplasm. It carries out the reaction 5-[(5-phospho-1-deoxy-D-ribulos-1-ylimino)methylamino]-1-(5-phospho-beta-D-ribosyl)imidazole-4-carboxamide + L-glutamine = D-erythro-1-(imidazol-4-yl)glycerol 3-phosphate + 5-amino-1-(5-phospho-beta-D-ribosyl)imidazole-4-carboxamide + L-glutamate + H(+). It participates in amino-acid biosynthesis; L-histidine biosynthesis; L-histidine from 5-phospho-alpha-D-ribose 1-diphosphate: step 5/9. Functionally, IGPS catalyzes the conversion of PRFAR and glutamine to IGP, AICAR and glutamate. The HisF subunit catalyzes the cyclization activity that produces IGP and AICAR from PRFAR using the ammonia provided by the HisH subunit. The polypeptide is Imidazole glycerol phosphate synthase subunit HisF (Stenotrophomonas maltophilia (strain K279a)).